The following is a 506-amino-acid chain: ATP synthase subunit alpha (506 aa).

169–176 contributes to the ATP binding site; the sequence is GDRQTGKT.

Belongs to the ATPase alpha/beta chains family. In terms of assembly, F-type ATPases have 2 components, CF(1) - the catalytic core - and CF(0) - the membrane proton channel. CF(1) has five subunits: alpha(3), beta(3), gamma(1), delta(1), epsilon(1). CF(0) has three main subunits: a(1), b(2) and c(9-12). The alpha and beta chains form an alternating ring which encloses part of the gamma chain. CF(1) is attached to CF(0) by a central stalk formed by the gamma and epsilon chains, while a peripheral stalk is formed by the delta and b chains.

It is found in the cell membrane. It catalyses the reaction ATP + H2O + 4 H(+)(in) = ADP + phosphate + 5 H(+)(out). Its function is as follows. Produces ATP from ADP in the presence of a proton gradient across the membrane. The alpha chain is a regulatory subunit. This chain is ATP synthase subunit alpha, found in Lawsonia intracellularis (strain PHE/MN1-00).